Reading from the N-terminus, the 308-residue chain is C-4 methylsterol oxidase (308 aa).

A helical membrane pass occupies residues 56–76; it reads LLFFLTHEIFYFGRCLPWAII. The Fatty acid hydroxylase domain occupies 145–282; it reads WAVFFVLEDT…FRWWDFILDT (138 aa). The Histidine box-1 signature appears at 160–164; sequence HRGLH. The Histidine box-2 motif lies at 173–177; that stretch reads HKQHH. Residues 257–263 carry the Histidine box-3 motif; the sequence is HHDEHHH.

It belongs to the sterol desaturase family. Requires Fe cation as cofactor.

The protein localises to the endoplasmic reticulum membrane. It carries out the reaction 4,4-dimethyl-5alpha-cholest-7-en-3beta-ol + 6 Fe(II)-[cytochrome b5] + 3 O2 + 5 H(+) = 4alpha-carboxy-4beta-methyl-5alpha-cholest-7-ene-3beta-ol + 6 Fe(III)-[cytochrome b5] + 4 H2O. Its pathway is steroid biosynthesis; zymosterol biosynthesis; zymosterol from lanosterol: step 3/6. Its function is as follows. C-4 methylsterol oxidase; part of the third module of ergosterol biosynthesis pathway that includes the late steps of the pathway. ERG25 is a catalytic component of the C-4 demethylation complex that catalyzes the conversion of 4,4-dimethylfecosterol into fecosterol via 4-methylfecosterol. Catalyzes the three-step monooxygenation required for the demethylation of 4,4-dimethyl and 4alpha-methylsterols. The third module or late pathway involves the ergosterol synthesis itself through consecutive reactions that mainly occur in the endoplasmic reticulum (ER) membrane. Firstly, the squalene synthase ERG9 catalyzes the condensation of 2 farnesyl pyrophosphate moieties to form squalene, which is the precursor of all steroids. Squalene synthase is crucial for balancing the incorporation of farnesyl diphosphate (FPP) into sterol and nonsterol isoprene synthesis. Secondly, the squalene epoxidase ERG1 catalyzes the stereospecific oxidation of squalene to (S)-2,3-epoxysqualene, which is considered to be a rate-limiting enzyme in steroid biosynthesis. Then, the lanosterol synthase ERG7 catalyzes the cyclization of (S)-2,3 oxidosqualene to lanosterol, a reaction that forms the sterol core. In the next steps, lanosterol is transformed to zymosterol through a complex process involving various demethylation, reduction and desaturation reactions. The lanosterol 14-alpha-demethylase ERG11 (also known as CYP51) catalyzes C14-demethylation of lanosterol to produce 4,4'-dimethyl cholesta-8,14,24-triene-3-beta-ol, which is critical for ergosterol biosynthesis. The C-14 reductase ERG24 reduces the C14=C15 double bond of 4,4-dimethyl-cholesta-8,14,24-trienol to produce 4,4-dimethyl-cholesta-8,24-dienol. 4,4-dimethyl-cholesta-8,24-dienol is substrate of the C-4 demethylation complex ERG25-ERG26-ERG27 in which ERG25 catalyzes the three-step monooxygenation required for the demethylation of 4,4-dimethyl and 4alpha-methylsterols, ERG26 catalyzes the oxidative decarboxylation that results in a reduction of the 3-beta-hydroxy group at the C-3 carbon to an oxo group, and ERG27 is responsible for the reduction of the keto group on the C-3. ERG28 has a role as a scaffold to help anchor ERG25, ERG26 and ERG27 to the endoplasmic reticulum and ERG29 regulates the activity of the iron-containing C4-methylsterol oxidase ERG25. Then, the sterol 24-C-methyltransferase ERG6 catalyzes the methyl transfer from S-adenosyl-methionine to the C-24 of zymosterol to form fecosterol. The C-8 sterol isomerase ERG2 catalyzes the reaction which results in unsaturation at C-7 in the B ring of sterols and thus converts fecosterol to episterol. The sterol-C5-desaturase ERG3 then catalyzes the introduction of a C-5 double bond in the B ring to produce 5-dehydroepisterol. The C-22 sterol desaturase ERG5 further converts 5-dehydroepisterol into ergosta-5,7,22,24(28)-tetraen-3beta-ol by forming the C-22(23) double bond in the sterol side chain. Finally, ergosta-5,7,22,24(28)-tetraen-3beta-ol is substrate of the C-24(28) sterol reductase ERG4 to produce ergosterol. In Candida albicans (strain SC5314 / ATCC MYA-2876) (Yeast), this protein is C-4 methylsterol oxidase.